We begin with the raw amino-acid sequence, 346 residues long: Galactitol 1-phosphate 5-dehydrogenase (346 aa).

The Zn(2+) site is built by Cys38, His59, Cys89, Cys92, Cys95, Cys103, and Glu144.

The protein belongs to the zinc-containing alcohol dehydrogenase family. It depends on Zn(2+) as a cofactor.

The catalysed reaction is galactitol 1-phosphate + NAD(+) = keto-D-tagatose 6-phosphate + NADH + H(+). Its function is as follows. Converts galactitol 1-phosphate to tagatose 6-phosphate. The chain is Galactitol 1-phosphate 5-dehydrogenase (gatD) from Escherichia coli O157:H7.